The primary structure comprises 218 residues: Pyridoxine/pyridoxamine 5'-phosphate oxidase (218 aa).

FMN is bound by residues Arg-66 to Lys-71, Arg-87, Lys-88, and Gln-110. Lys-71 contacts substrate. Substrate contacts are provided by Tyr-128, Arg-132, and Ser-136. FMN contacts are provided by residues Gln-145–Ser-146 and Trp-190. Residue Arg-196–His-198 coordinates substrate. Arg-200 contacts FMN.

The protein belongs to the pyridoxamine 5'-phosphate oxidase family. Homodimer. The cofactor is FMN.

The catalysed reaction is pyridoxamine 5'-phosphate + O2 + H2O = pyridoxal 5'-phosphate + H2O2 + NH4(+). It carries out the reaction pyridoxine 5'-phosphate + O2 = pyridoxal 5'-phosphate + H2O2. Its pathway is cofactor metabolism; pyridoxal 5'-phosphate salvage; pyridoxal 5'-phosphate from pyridoxamine 5'-phosphate: step 1/1. It participates in cofactor metabolism; pyridoxal 5'-phosphate salvage; pyridoxal 5'-phosphate from pyridoxine 5'-phosphate: step 1/1. Its function is as follows. Catalyzes the oxidation of either pyridoxine 5'-phosphate (PNP) or pyridoxamine 5'-phosphate (PMP) into pyridoxal 5'-phosphate (PLP). This is Pyridoxine/pyridoxamine 5'-phosphate oxidase from Anaplasma marginale (strain St. Maries).